The following is a 194-amino-acid chain: Imidazole glycerol phosphate synthase subunit HisH (194 aa).

A Glutamine amidotransferase type-1 domain is found at Arg3–Leu194. Cys74 acts as the Nucleophile in catalysis. Residues His176 and Glu178 contribute to the active site.

Heterodimer of HisH and HisF.

Its subcellular location is the cytoplasm. The enzyme catalyses 5-[(5-phospho-1-deoxy-D-ribulos-1-ylimino)methylamino]-1-(5-phospho-beta-D-ribosyl)imidazole-4-carboxamide + L-glutamine = D-erythro-1-(imidazol-4-yl)glycerol 3-phosphate + 5-amino-1-(5-phospho-beta-D-ribosyl)imidazole-4-carboxamide + L-glutamate + H(+). It catalyses the reaction L-glutamine + H2O = L-glutamate + NH4(+). It functions in the pathway amino-acid biosynthesis; L-histidine biosynthesis; L-histidine from 5-phospho-alpha-D-ribose 1-diphosphate: step 5/9. In terms of biological role, IGPS catalyzes the conversion of PRFAR and glutamine to IGP, AICAR and glutamate. The HisH subunit catalyzes the hydrolysis of glutamine to glutamate and ammonia as part of the synthesis of IGP and AICAR. The resulting ammonia molecule is channeled to the active site of HisF. This is Imidazole glycerol phosphate synthase subunit HisH from Pyrococcus furiosus (strain ATCC 43587 / DSM 3638 / JCM 8422 / Vc1).